The chain runs to 989 residues: Mediator of RNA polymerase II transcription subunit 24 (989 aa).

6 short sequence motifs (LXXLL motif) span residues 128-132 (LHWLL), 344-348 (LTPLL), 448-452 (LDLLL), 557-561 (LVALL), 788-792 (LPGLL), and 857-861 (LMRLL). Phosphoserine occurs at positions 862 and 873.

Belongs to the Mediator complex subunit 24 family. In terms of assembly, component of the Mediator complex, which is composed of MED1, MED4, MED6, MED7, MED8, MED9, MED10, MED11, MED12, MED13, MED13L, MED14, MED15, MED16, MED17, MED18, MED19, MED20, MED21, MED22, MED23, MED24, MED25, MED26, MED27, MED29, MED30, MED31, CCNC, CDK8 and CDC2L6/CDK11. The MED12, MED13, CCNC and CDK8 subunits form a distinct module termed the CDK8 module. Mediator containing the CDK8 module is less active than Mediator lacking this module in supporting transcriptional activation. Individual preparations of the Mediator complex lacking one or more distinct subunits have been variously termed ARC, CRSP, DRIP, PC2, SMCC and TRAP. Interacts with AR. In terms of tissue distribution, ubiquitous. Abundant in skeletal muscle, heart and placenta.

It localises to the nucleus. Component of the Mediator complex, a coactivator involved in the regulated transcription of nearly all RNA polymerase II-dependent genes. Mediator functions as a bridge to convey information from gene-specific regulatory proteins to the basal RNA polymerase II transcription machinery. Mediator is recruited to promoters by direct interactions with regulatory proteins and serves as a scaffold for the assembly of a functional preinitiation complex with RNA polymerase II and the general transcription factors. This is Mediator of RNA polymerase II transcription subunit 24 (MED24) from Homo sapiens (Human).